Reading from the N-terminus, the 292-residue chain is uncharacterized protein (292 aa).

The helical transmembrane segment at 13 to 35 (LFILFIIVVCIYLLPRVAINAFY) threads the bilayer.

Belongs to the serine esterase family.

The protein resides in the membrane. This is an uncharacterized protein from Salmonella typhi.